Reading from the N-terminus, the 517-residue chain is Cobyric acid synthase (517 aa).

The region spanning 253 to 453 is the GATase cobBQ-type domain; sequence EVEIAVIKLP…IHGILDNDSL (201 aa). The Nucleophile role is filled by Cys-334. Residue His-445 is part of the active site.

The protein belongs to the CobB/CobQ family. CobQ subfamily.

It participates in cofactor biosynthesis; adenosylcobalamin biosynthesis. Its function is as follows. Catalyzes amidations at positions B, D, E, and G on adenosylcobyrinic A,C-diamide. NH(2) groups are provided by glutamine, and one molecule of ATP is hydrogenolyzed for each amidation. The sequence is that of Cobyric acid synthase from Moorella thermoacetica (strain ATCC 39073 / JCM 9320).